The chain runs to 349 residues: Terpene synthase 2 (349 aa).

The short motif at 84-89 is the DDxx(x)D/E motif element; that stretch reads DDLFDG. Positions 229–237 match the NDxxSxxxD/E motif motif; it reads NDCVSYEKE.

This sequence belongs to the terpene synthase family.

The enzyme catalyses (2E,6E)-farnesyl diphosphate = (3S)-(+)-asterisca-2(9),6-diene + diphosphate. The catalysed reaction is (2E)-geranyl diphosphate = (Z)-beta-ocimene + diphosphate. It carries out the reaction (2E)-geranyl diphosphate + H2O = linalool + diphosphate. Functionally, terpene synthase that converts its substrate farnesyl diphosphate (FPP) into the sesquiterpene (3S)-(+)-asterisca-2(9),6-diene. Is also able to convert geranyl diphosphate (GPP) into a mixture of monoterpenes including (Z)-beta-ocimene, allo-ocimene and linalool. In Dictyostelium discoideum (Social amoeba), this protein is Terpene synthase 2.